Consider the following 128-residue polypeptide: Phosphoribosyl-AMP cyclohydrolase (128 aa).

Residue aspartate 94 participates in Mg(2+) binding. Residue cysteine 95 coordinates Zn(2+). Residues aspartate 96 and aspartate 98 each contribute to the Mg(2+) site. Cysteine 111 and cysteine 118 together coordinate Zn(2+).

It belongs to the PRA-CH family. In terms of assembly, homodimer. Requires Mg(2+) as cofactor. Zn(2+) serves as cofactor.

The protein localises to the cytoplasm. It catalyses the reaction 1-(5-phospho-beta-D-ribosyl)-5'-AMP + H2O = 1-(5-phospho-beta-D-ribosyl)-5-[(5-phospho-beta-D-ribosylamino)methylideneamino]imidazole-4-carboxamide. It functions in the pathway amino-acid biosynthesis; L-histidine biosynthesis; L-histidine from 5-phospho-alpha-D-ribose 1-diphosphate: step 3/9. Catalyzes the hydrolysis of the adenine ring of phosphoribosyl-AMP. This is Phosphoribosyl-AMP cyclohydrolase from Streptomyces coelicolor (strain ATCC BAA-471 / A3(2) / M145).